The following is a 747-amino-acid chain: MSLIMFGRTLGEESVRYFERLKRRRDERFGTLESPTPCSTRQGSLGNATQIPFLNFAIDVTRRHQAVIPGIGTLHNCCEYIPLFSATARRAMFGAFLSSTGYNCTPNVVLKPWRYSVNANVSPELKKAVSSVQFYEYSPEEAAPHRNAYSGVMNTFRAFSLSDSFCQLSTFTQRFSYLVETSFESIEECGSHGKRAKVDVPIYGRYKGTLELFQKMILMHTTHFISSVLLGDHADRVDCFLRTVFNTPSVSDSVLEHFKQKSTVFLVPRRHGKTWFLVPLIALVMATFRGIKVGYTAHIRKATEPVFEGIKSRLEQWFGANYVDHVKGESITFSFTDGSYSTAVFASSHNTNGIRGQDFNLLFVDEANFIRPDAVQTIVGFLNQTNCKIIFVSSTNTGKASTSFLYNLRGSSDQLLNVVTYVCDDHMPRVLAHSDVTACSCYVLNKPVFITMDGAMRRTADLFMADSFVQEIVGGRKQNSGGVGFDRPLFTKTARERFILYRPSTVANCAILSSVLYVYVDPAFTSNTRASGTGVAIVGRYKSDWIIFGLEHFFLRALTGTSSSEIGRCVTQCLGHILALHPNTFTNVHVSIEGNSSQDSAVAISLAIAQQFAVLEKGNVLSSAPVLLFYHSIPPGCSVAYPFFLLQKQKTPAVDYFVKRFNSGNIIASQELVSLTVKLGVDPVEYLCKQLDNLTEVIKGGMGNLDTKTYTGKGTTGTMSDDLMVALIMSVYIGSSCIPDSVFMPIK.

A Nuclear localization signal motif is present at residues 194–198 (KRAKV). Residues 267–274 (VPRRHGKT) carry the Walker A motif motif. The Walker B motif motif lies at 361 to 366 (LLFVDE). The active-site For ATPase activity is the E366. Active-site for nuclease activity residues include D521, E593, and D722.

This sequence belongs to the herpesviridae TRM3 protein family. As to quaternary structure, interacts with the terminase subunits TRM1 and TRM2. Interacts with portal protein.

It is found in the host nucleus. Component of the molecular motor that translocates viral genomic DNA in empty capsid during DNA packaging. Forms a tripartite terminase complex together with TRM1 and TRM2 in the host cytoplasm. Once the complex reaches the host nucleus, it interacts with the capsid portal vertex. This portal forms a ring in which genomic DNA is translocated into the capsid. TRM3 carries an RNase H-like nuclease activity that plays an important role for the cleavage of concatemeric viral DNA into unit length genomes. The sequence is that of Tripartite terminase subunit 3 from Homo sapiens (Human).